The chain runs to 519 residues: SMR domain-containing protein At5g58720 (519 aa).

A compositionally biased stretch (basic residues) spans 1–15; that stretch reads MKQKNQHKKKKKRSC. Disordered stretches follow at residues 1–47 and 92–128; these read MKQK…REIE and ESGD…CSED. A compositionally biased stretch (basic and acidic residues) spans 28 to 47; the sequence is GNKKDVEEERKDGEGKREIE. The segment covering 98 to 127 has biased composition (low complexity); sequence STSSVASGSSGQETASTSEYGAGSSSSCSE. Residues 428 to 502 enclose the Smr domain; the sequence is IDLHGQHVKP…NRGTLLIKLD (75 aa).

As to quaternary structure, interacts with PRL1.

This Arabidopsis thaliana (Mouse-ear cress) protein is SMR domain-containing protein At5g58720.